Reading from the N-terminus, the 204-residue chain is Partner of Y14 and mago (204 aa).

Disordered regions lie at residues 1 to 121 (MGSR…QSVN) and 133 to 153 (SSNN…EDVE). The span at 7–36 (EQGKRMAELSKNLKEGERILEPTRRPDGTL) shows a compositional bias: basic and acidic residues. A compositionally biased stretch (polar residues) spans 104–121 (KANSSEDGSASNGSQSVN). The short motif at 195–200 (ELKALE) is the Nuclear export signal element.

It belongs to the pym family. As to quaternary structure, interacts with MAGO and Y14. Expressed in root and shoot meristems, cotyledons, vascular tissues of leaves, receptacle of flowers and siliques, and pollen grains.

The protein resides in the cytoplasm. Its subcellular location is the nucleus. It localises to the nucleolus. It is found in the nucleoplasm. In terms of biological role, key regulator of the exon junction complex (EJC), a multiprotein complex that associates immediately upstream of the exon-exon junction on mRNAs and serves as a positional landmark for the intron exon structure of genes and directs post-transcriptional processes in the cytoplasm such as mRNA export, nonsense-mediated mRNA decay (NMD) or translation. Acts as an EJC disassembly factor, allowing translation-dependent EJC removal and recycling by disrupting mature EJC from spliced mRNAs. Can increase in vitro the expression from reporter constructs that contain leader introns required for the expression of different genes. In association with MAGO and PYM, participates in intron-mediated enhancement of gene expression. The chain is Partner of Y14 and mago from Arabidopsis thaliana (Mouse-ear cress).